The primary structure comprises 147 residues: MFNMNINSPVRFVKETNRAKSPTRQSPGAAGYDLYSAYDYTIPPGERQLIKTDISMSMPKICYGRIAPRSGLSLKGIDIGGGVIDEDYRGNIGVILINNGKCTFNVNTGDRIAQLIYQRIYYPELEEVQSLDSTNRGDQGFGSTGLR.

Arginine 24 lines the Mg(2+) pocket. DUTP-binding positions include 68-70, 82-85, tyrosine 88, glycine 93, isoleucine 95, and arginine 111; these read PRS and GVID.

The protein belongs to the dUTPase family.

The enzyme catalyses dUTP + H2O = dUMP + diphosphate + H(+). This enzyme is involved in nucleotide metabolism: it produces dUMP, the immediate precursor of thymidine nucleotides and it decreases the intracellular concentration of dUTP so that uracil cannot be incorporated into DNA. The chain is Deoxyuridine 5'-triphosphate nucleotidohydrolase (OPG046) from Homo sapiens (Human).